A 404-amino-acid polypeptide reads, in one-letter code: Tryptophan synthase beta chain (404 aa).

The residue at position 98 (lysine 98) is an N6-(pyridoxal phosphate)lysine.

The protein belongs to the TrpB family. Tetramer of two alpha and two beta chains. Pyridoxal 5'-phosphate is required as a cofactor.

The enzyme catalyses (1S,2R)-1-C-(indol-3-yl)glycerol 3-phosphate + L-serine = D-glyceraldehyde 3-phosphate + L-tryptophan + H2O. The protein operates within amino-acid biosynthesis; L-tryptophan biosynthesis; L-tryptophan from chorismate: step 5/5. Functionally, the beta subunit is responsible for the synthesis of L-tryptophan from indole and L-serine. The protein is Tryptophan synthase beta chain of Rhodopseudomonas palustris (strain HaA2).